The chain runs to 241 residues: Caffeoyl-CoA O-methyltransferase (241 aa).

A Blocked amino end (Met) modification is found at Met1. Lys15 serves as a coordination point for substrate. S-adenosyl-L-methionine contacts are provided by residues Thr57, Glu79, 81-82 (GV), Ser87, Asp105, and Ala134. Asp157 lines the substrate pocket. Asp157 lines the a divalent metal cation pocket. Residue Asp159 coordinates S-adenosyl-L-methionine. Asp183 and Asn184 together coordinate a divalent metal cation. Asn188 provides a ligand contact to substrate.

The protein belongs to the class I-like SAM-binding methyltransferase superfamily. Cation-dependent O-methyltransferase family. CCoAMT subfamily. Homodimer. It depends on a divalent metal cation as a cofactor. In terms of tissue distribution, roots and leaves.

The enzyme catalyses (E)-caffeoyl-CoA + S-adenosyl-L-methionine = (E)-feruloyl-CoA + S-adenosyl-L-homocysteine + H(+). It functions in the pathway aromatic compound metabolism; phenylpropanoid biosynthesis. Methylates caffeoyl-CoA to feruloyl-CoA and 5-hydroxyferuloyl-CoA to sinapoyl-CoA. Plays a role in the synthesis of feruloylated polysaccharides. Involved in the reinforcement of the plant cell wall. Also involved in the responding to wounding or pathogen challenge by the increased formation of cell wall-bound ferulic acid polymers. This Petroselinum crispum (Parsley) protein is Caffeoyl-CoA O-methyltransferase.